The sequence spans 81 residues: Antitoxin VapB28 (81 aa).

In terms of biological role, antitoxin component of a type II toxin-antitoxin (TA) system. The chain is Antitoxin VapB28 (vapB28) from Mycobacterium tuberculosis (strain CDC 1551 / Oshkosh).